A 152-amino-acid polypeptide reads, in one-letter code: Xanthine-guanine phosphoribosyltransferase (152 aa).

5-phospho-alpha-D-ribose 1-diphosphate-binding positions include Arg37–Gly38 and Asp88–Thr96. Mg(2+) is bound at residue Asp89. Residues Asp92 and Ile135 each contribute to the guanine site. Xanthine-binding residues include Asp92 and Ile135. Residues Asp92–Thr96 and Trp134–Ile135 each bind GMP.

Belongs to the purine/pyrimidine phosphoribosyltransferase family. XGPT subfamily. In terms of assembly, homotetramer. Mg(2+) is required as a cofactor.

It is found in the cell inner membrane. The enzyme catalyses GMP + diphosphate = guanine + 5-phospho-alpha-D-ribose 1-diphosphate. The catalysed reaction is XMP + diphosphate = xanthine + 5-phospho-alpha-D-ribose 1-diphosphate. It carries out the reaction IMP + diphosphate = hypoxanthine + 5-phospho-alpha-D-ribose 1-diphosphate. Its pathway is purine metabolism; GMP biosynthesis via salvage pathway; GMP from guanine: step 1/1. It functions in the pathway purine metabolism; XMP biosynthesis via salvage pathway; XMP from xanthine: step 1/1. Its function is as follows. Purine salvage pathway enzyme that catalyzes the transfer of the ribosyl-5-phosphate group from 5-phospho-alpha-D-ribose 1-diphosphate (PRPP) to the N9 position of the 6-oxopurines guanine and xanthine to form the corresponding ribonucleotides GMP (guanosine 5'-monophosphate) and XMP (xanthosine 5'-monophosphate), with the release of PPi. To a lesser extent, also acts on hypoxanthine. This Actinobacillus succinogenes (strain ATCC 55618 / DSM 22257 / CCUG 43843 / 130Z) protein is Xanthine-guanine phosphoribosyltransferase.